A 402-amino-acid polypeptide reads, in one-letter code: S-adenosylmethionine synthase (402 aa).

An ATP-binding site is contributed by H15. D17 contributes to the Mg(2+) binding site. E43 is a K(+) binding site. Residues E56 and Q99 each contribute to the L-methionine site. The interval 99 to 109 (QSPDIAQGVDT) is flexible loop. Residues 174-176 (DGK), 247-248 (RF), D256, 262-263 (RK), A279, and K283 contribute to the ATP site. An L-methionine-binding site is contributed by D256. An L-methionine-binding site is contributed by K287.

The protein belongs to the AdoMet synthase family. As to quaternary structure, homotetramer; dimer of dimers. Mg(2+) serves as cofactor. It depends on K(+) as a cofactor.

Its subcellular location is the cytoplasm. It carries out the reaction L-methionine + ATP + H2O = S-adenosyl-L-methionine + phosphate + diphosphate. It participates in amino-acid biosynthesis; S-adenosyl-L-methionine biosynthesis; S-adenosyl-L-methionine from L-methionine: step 1/1. Functionally, catalyzes the formation of S-adenosylmethionine (AdoMet) from methionine and ATP. The overall synthetic reaction is composed of two sequential steps, AdoMet formation and the subsequent tripolyphosphate hydrolysis which occurs prior to release of AdoMet from the enzyme. This Streptomyces avermitilis (strain ATCC 31267 / DSM 46492 / JCM 5070 / NBRC 14893 / NCIMB 12804 / NRRL 8165 / MA-4680) protein is S-adenosylmethionine synthase.